Here is a 277-residue protein sequence, read N- to C-terminus: Cell death abnormality protein 2 (277 aa).

An SH2 domain is found at 14–112 (FYFPGMSRED…EASLLSAYKK (99 aa)). An SH3 1 domain is found at 113-173 (PIIEVVVGTF…PANYVQVQSG (61 aa)). The segment at 179 to 217 (RISKGTSQSSIGSSGNGAERFSSTSTSSENAEAHPTLPT) is disordered. Low complexity predominate over residues 182–206 (KGTSQSSIGSSGNGAERFSSTSTSS). Residues 214–275 (TLPTTAKVTF…PFTYIRFNTA (62 aa)) enclose the SH3 2 domain.

It belongs to the CRK family. As to quaternary structure, interacts with ced-5 (via C-terminus which contains a candidate SH3-binding, proline-rich region). Forms a ternary complex with ced-5 and ced-12. Interacts (via SH-2 domain) with src-1 (when activated and phosphorylated at 'Tyr-416').

In terms of biological role, required for cell migration and engulfment of cell corpses but not for programmed cell death/apoptosis. Also has a role in the migration of the 2 gonadal distal tip cells (DTCs). The protein is Cell death abnormality protein 2 of Caenorhabditis briggsae.